Reading from the N-terminus, the 524-residue chain is Probable pectinesterase/pectinesterase inhibitor 42 (524 aa).

A signal peptide spans methionine 1–lysine 22. The segment at glutamate 23–leucine 172 is pectinesterase inhibitor 42. The interval aspartate 215 to glutamate 510 is pectinesterase 42. N-linked (GlcNAc...) asparagine glycans are attached at residues asparagine 265 and asparagine 281. A substrate-binding site is contributed by threonine 290. Catalysis depends on aspartate 343, which acts as the Proton donor; for pectinesterase activity. Cysteine 357 and cysteine 377 form a disulfide bridge. Aspartate 364 acts as the Nucleophile; for pectinesterase activity in catalysis. The N-linked (GlcNAc...) asparagine glycan is linked to asparagine 412. Residues arginine 430 and tryptophan 432 each contribute to the substrate site.

This sequence in the N-terminal section; belongs to the PMEI family. It in the C-terminal section; belongs to the pectinesterase family. Expressed in siliques but not in flower buds.

The protein resides in the secreted. It is found in the cell wall. It carries out the reaction [(1-&gt;4)-alpha-D-galacturonosyl methyl ester](n) + n H2O = [(1-&gt;4)-alpha-D-galacturonosyl](n) + n methanol + n H(+). Its pathway is glycan metabolism; pectin degradation; 2-dehydro-3-deoxy-D-gluconate from pectin: step 1/5. In terms of biological role, acts in the modification of cell walls via demethylesterification of cell wall pectin. The chain is Probable pectinesterase/pectinesterase inhibitor 42 (PME42) from Arabidopsis thaliana (Mouse-ear cress).